The chain runs to 291 residues: ATP synthase gamma chain (291 aa).

It belongs to the ATPase gamma chain family. In terms of assembly, F-type ATPases have 2 components, CF(1) - the catalytic core - and CF(0) - the membrane proton channel. CF(1) has five subunits: alpha(3), beta(3), gamma(1), delta(1), epsilon(1). CF(0) has three main subunits: a, b and c.

It localises to the cell inner membrane. In terms of biological role, produces ATP from ADP in the presence of a proton gradient across the membrane. The gamma chain is believed to be important in regulating ATPase activity and the flow of protons through the CF(0) complex. This Burkholderia cenocepacia (strain ATCC BAA-245 / DSM 16553 / LMG 16656 / NCTC 13227 / J2315 / CF5610) (Burkholderia cepacia (strain J2315)) protein is ATP synthase gamma chain.